Reading from the N-terminus, the 345-residue chain is tRNA pseudouridine synthase B (345 aa).

Asp-39 (nucleophile) is an active-site residue.

The protein belongs to the pseudouridine synthase TruB family. Type 1 subfamily.

It carries out the reaction uridine(55) in tRNA = pseudouridine(55) in tRNA. In terms of biological role, responsible for synthesis of pseudouridine from uracil-55 in the psi GC loop of transfer RNAs. This is tRNA pseudouridine synthase B from Rickettsia peacockii (strain Rustic).